A 380-amino-acid polypeptide reads, in one-letter code: 8-amino-7-oxononanoate synthase (380 aa).

R26 provides a ligand contact to substrate. Residue 104–105 coordinates pyridoxal 5'-phosphate; it reads GY. H129 serves as a coordination point for substrate. Pyridoxal 5'-phosphate is bound by residues S175, 200 to 203, and 232 to 235; these read DEAH and TLSK. K235 bears the N6-(pyridoxal phosphate)lysine mark. T345 lines the substrate pocket.

The protein belongs to the class-II pyridoxal-phosphate-dependent aminotransferase family. BioF subfamily. As to quaternary structure, homodimer. The cofactor is pyridoxal 5'-phosphate.

The enzyme catalyses 6-carboxyhexanoyl-[ACP] + L-alanine + H(+) = (8S)-8-amino-7-oxononanoate + holo-[ACP] + CO2. It functions in the pathway cofactor biosynthesis; biotin biosynthesis. Its function is as follows. Catalyzes the decarboxylative condensation of pimeloyl-[acyl-carrier protein] and L-alanine to produce 8-amino-7-oxononanoate (AON), [acyl-carrier protein], and carbon dioxide. The chain is 8-amino-7-oxononanoate synthase from Mycolicibacterium gilvum (strain PYR-GCK) (Mycobacterium gilvum (strain PYR-GCK)).